The sequence spans 214 residues: Large ribosomal subunit protein eL14 (214 aa).

Lysine 79 bears the N6-acetyllysine mark. Position 85 is an N6-acetyllysine; alternate (lysine 85). Position 85 is an N6-succinyllysine; alternate (lysine 85). Lysine 124 is covalently cross-linked (Glycyl lysine isopeptide (Lys-Gly) (interchain with G-Cter in SUMO2)). Residue serine 139 is modified to Phosphoserine. The disordered stretch occupies residues 161 to 214; it reads PAKKITTEGKKAPAQKAPAQKAAGQKAAPPPKTQKGQKAPSQKAPAPKASGKKA. One copy of the 1-1; approximate repeat lies at 170–174; it reads KKAPA. The segment at 170–189 is 4 X 5 AA tandem repeats of Q-K-A-[APS]-X; that stretch reads KKAPAQKAPAQKAAGQKAAP. The span at 172–214 shows a compositional bias: low complexity; the sequence is APAQKAPAQKAAGQKAAPPPKTQKGQKAPSQKAPAPKASGKKA. 5 consecutive repeat copies span residues 175–179, 180–184, 185–189, 192–194, and 195–197. Positions 192–197 are 2 X 3 AA tandem repeats of K-G-Q; the sequence is KTQKGQ. Position 203 is an N6-succinyllysine (lysine 203).

It belongs to the eukaryotic ribosomal protein eL14 family. Component of the large ribosomal subunit.

It is found in the cytoplasm. Its function is as follows. Component of the large ribosomal subunit. The ribosome is a large ribonucleoprotein complex responsible for the synthesis of proteins in the cell. The chain is Large ribosomal subunit protein eL14 (RPL14) from Bos taurus (Bovine).